The chain runs to 608 residues: Albumin (608 aa).

The first 18 residues, 1–18 (MKWVTFISLFFLFSSAYS), serve as a signal peptide directing secretion. Residues 19-24 (RGLVRR) constitute a propeptide that is removed on maturation. Albumin domains are found at residues 19 to 210 (RGLV…EALR), 211 to 403 (EKVL…EFKP), and 404 to 601 (LVDE…KLVA). S29 carries the post-translational modification Phosphoserine. Ca(2+) contacts are provided by E30 and D37. A disulfide bridge connects residues C77 and C86. Residues S82 and S89 each carry the phosphoserine modification. Residue H91 participates in Zn(2+) binding. 6 cysteine pairs are disulfide-bonded: C99-C115, C114-C125, C148-C193, C192-C201, C224-C270, and C269-C277. K229 bears the N6-succinyllysine mark. Residue E268 participates in Ca(2+) binding. Zn(2+) contacts are provided by H271 and D273. 4 residues coordinate Ca(2+): D273, E276, D279, and D283. Disulfide bonds link C289–C303, C302–C313, C340–C385, C384–C393, C416–C462, C461–C472, C485–C501, and C500–C511. S443 carries the phosphoserine modification. Phosphothreonine occurs at positions 444 and 446. K460 is modified (N6-succinyllysine). S513 carries the phosphoserine modification. Cystine bridges form between C538-C583 and C582-C591. An N6-methyllysine modification is found at K558. Residue T570 is modified to Phosphothreonine. The residue at position 588 (K588) is an N6-succinyllysine.

This sequence belongs to the ALB/AFP/VDB family. Interacts with FCGRT; this interaction regulates ALB homeostasis. Interacts with TASOR. In plasma, occurs in a covalently-linked complex with chromophore-bound alpha-1-microglobulin; this interaction does not prevent fatty acid binding to ALB. In terms of processing, phosphorylated by FAM20C in the extracellular medium. In terms of tissue distribution, plasma.

It is found in the secreted. Functionally, binds water, Ca(2+), Na(+), K(+), fatty acids, hormones, bilirubin and drugs. Its main function is the regulation of the colloidal osmotic pressure of blood. Major zinc transporter in plasma, typically binds about 80% of all plasma zinc. Major calcium and magnesium transporter in plasma, binds approximately 45% of circulating calcium and magnesium in plasma. Potentially has more than two calcium-binding sites and might additionally bind calcium in a non-specific manner. The shared binding site between zinc and calcium at residue Asp-273 suggests a crosstalk between zinc and calcium transport in the blood. The rank order of affinity is zinc &gt; calcium &gt; magnesium. Binds to the bacterial siderophore enterobactin and inhibits enterobactin-mediated iron uptake of E.coli from ferric transferrin, and may thereby limit the utilization of iron and growth of enteric bacteria such as E.coli. Does not prevent iron uptake by the bacterial siderophore aerobactin. The sequence is that of Albumin (ALB) from Canis lupus familiaris (Dog).